A 360-amino-acid polypeptide reads, in one-letter code: Peptide chain release factor 1 (360 aa).

The residue at position 235 (Gln235) is an N5-methylglutamine. Basic and acidic residues predominate over residues 284-293 (QKRQQEEAST). Residues 284-305 (QKRQQEEASTRRNLLGSGDRSD) are disordered.

This sequence belongs to the prokaryotic/mitochondrial release factor family. Post-translationally, methylated by PrmC. Methylation increases the termination efficiency of RF1.

The protein localises to the cytoplasm. Its function is as follows. Peptide chain release factor 1 directs the termination of translation in response to the peptide chain termination codons UAG and UAA. This chain is Peptide chain release factor 1, found in Pectobacterium carotovorum subsp. carotovorum (strain PC1).